The following is a 209-amino-acid chain: Elongation factor Ts, chloroplastic (209 aa).

The protein belongs to the EF-Ts family.

The protein resides in the plastid. The protein localises to the chloroplast. In terms of biological role, associates with the EF-Tu.GDP complex and induces the exchange of GDP to GTP. It remains bound to the aminoacyl-tRNA.EF-Tu.GTP complex up to the GTP hydrolysis stage on the ribosome. The protein is Elongation factor Ts, chloroplastic (tsf) of Cyanidioschyzon merolae (strain NIES-3377 / 10D) (Unicellular red alga).